The chain runs to 1501 residues: EF-hand calcium-binding domain-containing protein 6 (1501 aa).

The segment at 18 to 47 (RKFTHSRPHSSPCRVYSRNGSPNKFRSSST) is disordered. The segment covering 35–47 (RNGSPNKFRSSST) has biased composition (polar residues). 7 EF-hand domains span residues 70–105 (DRGD…FLMP), 172–207 (KNIK…FCMK), 297–332 (KSYE…FVYQ), 403–438 (DHSA…MAVK), 439–474 (LSDS…NCRM), 504–539 (RNLQ…FCPF), and 634–669 (QQDP…TGMP). A disordered region spans residues 699–718 (EDPPMRGPETTPPQPPTPSK). EF-hand domains follow at residues 741-776 (ESFR…LLLN), 847-882 (NRWS…FDIP), 883-918 (LTPR…NYSP), 964-999 (DRHQ…CGCS), 1069-1104 (SSQL…FCYK), 1176-1211 (SHYH…RVQI), and 1212-1247 (LTDE…ETAA). 4 residues coordinate Ca(2+): Asp-754, Asp-756, Asp-758, and Asp-765. Position 884 is a phosphothreonine (Thr-884). Residues 1246-1307 (AATPMATGDS…TTVIPGTPPL (62 aa)) are disordered. Composition is skewed to polar residues over residues 1270-1279 (GTRSALSLPT) and 1286-1301 (SKSQ…TTVI). Ser-1290 carries the phosphoserine modification. 2 positions are modified to phosphothreonine: Thr-1294 and Thr-1304. The tract at residues 1303 to 1501 (GTPPLQNCDP…YNDFLRAFLQ (199 aa)) is interaction with PARK7. 3 consecutive EF-hand domains span residues 1359-1394 (ISKE…LLKA), 1434-1469 (HCWR…YSIN), and 1470-1501 (LSEE…AFLQ). The tract at residues 1407–1501 (NAHKMKEAGA…YNDFLRAFLQ (95 aa)) is interaction with AR.

As to quaternary structure, microtubule inner protein component of sperm flagellar doublet microtubules. Binds PARK7. Part of a ternary complex containing PARK7, EFCAB6/DJBP and AR. In terms of tissue distribution, specifically expressed in the testis.

The protein localises to the nucleus. It localises to the cytoplasm. Its subcellular location is the cytoskeleton. The protein resides in the flagellum axoneme. Functionally, negatively regulates the androgen receptor by recruiting histone deacetylase complex, and protein DJ-1 antagonizes this inhibition by abrogation of this complex. Microtubule inner protein (MIP) part of the dynein-decorated doublet microtubules (DMTs) in cilia axoneme, which is required for motile cilia beating. In Homo sapiens (Human), this protein is EF-hand calcium-binding domain-containing protein 6.